The primary structure comprises 426 residues: MQNQRLIKQQQQQQQQQHQQAMIQQAMMQQHPSLYHPGVMAPPQMEPLPSGNLPPGFDPTTCRSVYAGNIHTQVTEILLQEIFASTGPIESCKLIRKDKSSYGFVHYFDRRCASMAIMTLNGRHIFGQPMKVNWAYATGQREDTSSHFNIFVGDLSPEVTDAALFDSFSAFNSCSDARVMWDQKTGRSRGFGFVSFRNQQDAQTAINEMNGKWVSSRQIRCNWATKGATFGEDKHSSDGKSVVELTNGSSEDGRELSNEDAPENNPQFTTVYVGNLSPEVTQLDLHRLFYTLGAGVIEEVRVQRDKGFGFVRYNTHDEAALAIQMGNAQPFLFSRQIRCSWGNKPTPSGTASNPLPPPAPASVPSLSAMDLLAYERQLALAKMHPQAQHSLRQAGLGVNVAGGTAAMYDGGYQNVAAAHQQLMYYQ.

Residues 1–26 are disordered; it reads MQNQRLIKQQQQQQQQQHQQAMIQQA. Residues 9 to 26 show a composition bias toward low complexity; it reads QQQQQQQQQHQQAMIQQA. 2 RRM domains span residues 63–137 and 148–226; these read RSVY…WAYA and FNIF…WATK. Positions 230–268 are disordered; that stretch reads FGEDKHSSDGKSVVELTNGSSEDGRELSNEDAPENNPQF. Ser-250 is modified (phosphoserine). In terms of domain architecture, RRM 3 spans 269 to 344; that stretch reads TTVYVGNLSP…RQIRCSWGNK (76 aa).

In terms of assembly, interacts with UBA1A and UBA2A.

It is found in the nucleus. In terms of biological role, heterogeneous nuclear ribonucleoprotein (hnRNP)-like protein that acts as a component of the pre-mRNA processing machinery. Functions to facilitate the nuclear maturation of plant pre-mRNAs. This Arabidopsis thaliana (Mouse-ear cress) protein is Oligouridylate-binding protein 1A (UBP1A).